The chain runs to 104 residues: Nucleoid-associated protein DICTH_1981 (104 aa).

Residues 85 to 104 (KSAEKMGSLADGLPLPPGLF) form a disordered region.

The protein belongs to the YbaB/EbfC family. As to quaternary structure, homodimer.

The protein resides in the cytoplasm. It is found in the nucleoid. Functionally, binds to DNA and alters its conformation. May be involved in regulation of gene expression, nucleoid organization and DNA protection. In Dictyoglomus thermophilum (strain ATCC 35947 / DSM 3960 / H-6-12), this protein is Nucleoid-associated protein DICTH_1981.